The following is a 349-amino-acid chain: MKFNLIIEQLDELIQSHSLTTNPDCNPDITQLAPLDEALSGHLSFIEGDKFASMIAKTNASALILPLNETLQTQATQQGIAWIATANPRLLFAHTIRLFYQPFRPSPGIHPTAVIDPDAQLGENVSIGANVVIQAGVKLGNEVCIHPNVVIYPGVTLGDRTILHGNCTIHERTVIGADCVIHSGAVIGSEGFGFVPTAEGWFKTEQSGITVLEDGVEVGCNSTIDRPAVGETRVKRNTKIDNLTHIAHGCQIGENCAFAAQVGLAGGVKVGNRVILAGQVGVANQAKIGDGAIASAQTGIPNDVAAGEIVSGSPCVPNKLYLKVSAIYKRLPEMYQALKQIQKQLEKNS.

The active-site Proton acceptor is the His248.

The protein belongs to the transferase hexapeptide repeat family. LpxD subfamily. In terms of assembly, homotrimer.

The enzyme catalyses a UDP-3-O-[(3R)-3-hydroxyacyl]-alpha-D-glucosamine + a (3R)-hydroxyacyl-[ACP] = a UDP-2-N,3-O-bis[(3R)-3-hydroxyacyl]-alpha-D-glucosamine + holo-[ACP] + H(+). It functions in the pathway bacterial outer membrane biogenesis; LPS lipid A biosynthesis. In terms of biological role, catalyzes the N-acylation of UDP-3-O-acylglucosamine using 3-hydroxyacyl-ACP as the acyl donor. Is involved in the biosynthesis of lipid A, a phosphorylated glycolipid that anchors the lipopolysaccharide to the outer membrane of the cell. In Gloeothece citriformis (strain PCC 7424) (Cyanothece sp. (strain PCC 7424)), this protein is UDP-3-O-acylglucosamine N-acyltransferase.